Reading from the N-terminus, the 226-residue chain is MLTWLQRDSLTFPPLAKAMREPNGLLAAGGDLSAERLIQAYRHGCFPWFSQGQPILWWSPDPRTVIFPDELHISRSLGKLLRQQRYTVTFDQDFAAVIQACAAPRAYADGTWITQSIQNAYLALHQRGYAHSVEVWDNGELVGGLYGLAMGQLFFGESMFSRADNASKFGFATLTRQLQAWGFVLIDCQMPNDHLHSLGARAISRSDFAGFLRDHLDQPNTGPWVS.

This sequence belongs to the L/F-transferase family.

It localises to the cytoplasm. The enzyme catalyses N-terminal L-lysyl-[protein] + L-leucyl-tRNA(Leu) = N-terminal L-leucyl-L-lysyl-[protein] + tRNA(Leu) + H(+). The catalysed reaction is N-terminal L-arginyl-[protein] + L-leucyl-tRNA(Leu) = N-terminal L-leucyl-L-arginyl-[protein] + tRNA(Leu) + H(+). It catalyses the reaction L-phenylalanyl-tRNA(Phe) + an N-terminal L-alpha-aminoacyl-[protein] = an N-terminal L-phenylalanyl-L-alpha-aminoacyl-[protein] + tRNA(Phe). Functionally, functions in the N-end rule pathway of protein degradation where it conjugates Leu, Phe and, less efficiently, Met from aminoacyl-tRNAs to the N-termini of proteins containing an N-terminal arginine or lysine. This Pseudomonas fluorescens (strain SBW25) protein is Leucyl/phenylalanyl-tRNA--protein transferase.